Reading from the N-terminus, the 109-residue chain is DNA-directed RNA polymerase subunit I (109 aa).

The enzyme catalyses RNA(n) + a ribonucleoside 5'-triphosphate = RNA(n+1) + diphosphate. Functionally, DNA-dependent RNA polymerase catalyzes the transcription of DNA into RNA using the four ribonucleoside triphosphates as substrates. In Methanocaldococcus jannaschii (strain ATCC 43067 / DSM 2661 / JAL-1 / JCM 10045 / NBRC 100440) (Methanococcus jannaschii), this protein is DNA-directed RNA polymerase subunit I (rpoI).